Here is a 154-residue protein sequence, read N- to C-terminus: 17 kDa surface antigen (154 aa).

Positions 1–19 (MKLLSKIMIIALAASMLQA) are cleaved as a signal peptide. Residue C20 is the site of N-palmitoyl cysteine attachment. C20 is lipidated: S-diacylglycerol cysteine.

Belongs to the rickettsiale 17 kDa surface antigen family.

The protein resides in the cell outer membrane. This is 17 kDa surface antigen (omp) from Rickettsia rhipicephali.